Here is a 314-residue protein sequence, read N- to C-terminus: Acetyl-coenzyme A carboxylase carboxyl transferase subunit beta (314 aa).

The 270-residue stretch at 24-293 folds into the CoA carboxyltransferase N-terminal domain; the sequence is LWIKCPDTGQ…IDAAPEPSPA (270 aa). A disordered region spans residues 283-314; sequence EIDAAPEPSPAAEEPAEPMPAPEAAAPSAPPA. Low complexity-rich tracts occupy residues 284-295 and 304-314; these read IDAAPEPSPAAE and PEAAAPSAPPA.

It belongs to the AccD/PCCB family. Acetyl-CoA carboxylase is a heterohexamer composed of biotin carboxyl carrier protein (AccB), biotin carboxylase (AccC) and two subunits each of ACCase subunit alpha (AccA) and ACCase subunit beta (AccD).

The protein resides in the cytoplasm. The enzyme catalyses N(6)-carboxybiotinyl-L-lysyl-[protein] + acetyl-CoA = N(6)-biotinyl-L-lysyl-[protein] + malonyl-CoA. It participates in lipid metabolism; malonyl-CoA biosynthesis; malonyl-CoA from acetyl-CoA: step 1/1. Functionally, component of the acetyl coenzyme A carboxylase (ACC) complex. Biotin carboxylase (BC) catalyzes the carboxylation of biotin on its carrier protein (BCCP) and then the CO(2) group is transferred by the transcarboxylase to acetyl-CoA to form malonyl-CoA. The polypeptide is Acetyl-coenzyme A carboxylase carboxyl transferase subunit beta (Nitrobacter hamburgensis (strain DSM 10229 / NCIMB 13809 / X14)).